We begin with the raw amino-acid sequence, 70 residues long: Small ribosomal subunit protein bS21B (70 aa).

This sequence belongs to the bacterial ribosomal protein bS21 family.

This is Small ribosomal subunit protein bS21B from Paraburkholderia xenovorans (strain LB400).